Here is a 165-residue protein sequence, read N- to C-terminus: 2-C-methyl-D-erythritol 2,4-cyclodiphosphate synthase (165 aa).

A divalent metal cation is bound by residues Asp12 and His14. 4-CDP-2-C-methyl-D-erythritol 2-phosphate is bound by residues 12–14 (DVH) and 38–39 (HS). His46 contributes to the a divalent metal cation binding site. Residues 60–62 (DIG), 65–69 (FPDTD), Phe143, and Arg146 each bind 4-CDP-2-C-methyl-D-erythritol 2-phosphate.

It belongs to the IspF family. Homotrimer. Requires a divalent metal cation as cofactor.

It carries out the reaction 4-CDP-2-C-methyl-D-erythritol 2-phosphate = 2-C-methyl-D-erythritol 2,4-cyclic diphosphate + CMP. It functions in the pathway isoprenoid biosynthesis; isopentenyl diphosphate biosynthesis via DXP pathway; isopentenyl diphosphate from 1-deoxy-D-xylulose 5-phosphate: step 4/6. In terms of biological role, involved in the biosynthesis of isopentenyl diphosphate (IPP) and dimethylallyl diphosphate (DMAPP), two major building blocks of isoprenoid compounds. Catalyzes the conversion of 4-diphosphocytidyl-2-C-methyl-D-erythritol 2-phosphate (CDP-ME2P) to 2-C-methyl-D-erythritol 2,4-cyclodiphosphate (ME-CPP) with a corresponding release of cytidine 5-monophosphate (CMP). The polypeptide is 2-C-methyl-D-erythritol 2,4-cyclodiphosphate synthase (Aromatoleum aromaticum (strain DSM 19018 / LMG 30748 / EbN1) (Azoarcus sp. (strain EbN1))).